Reading from the N-terminus, the 374-residue chain is MKPATATISREALRHNIELIKTFAPQQKLLAMIKANAYGQGLLPAADTLADLVEGFGVARLREALEIQETGYTGKILLIEGFFDREELLKTLSRRFDTVIHCQEQLELLEQVAEEWQQEQQKGFWKRKAKIYFPINVWLKIDTGMHRLGVHPEQVDMFYQRLKACPLVESISFVSHFSRADEPDCGYTEKQIAIFEAATSPYPTHERSISASSGILYWKQAHYDWVRPGIIMHGISPHYTPITDLGFKPVMTLSSSLIAVRTHKAGEPVGYGGTWISDKDTKLGVVAMGYGDGYPRNAPEGTPVLVNGRIVPIVGRVSMDMLTVDLGADSQDKVGDEVIFWGKDLLIEEVAQHIGVISYELITKLTPRVIFEYE.

Catalysis depends on Lys34, which acts as the Proton acceptor; specific for D-alanine. Lys34 carries the N6-(pyridoxal phosphate)lysine modification. Arg147 contributes to the substrate binding site. The active-site Proton acceptor; specific for L-alanine is Tyr271. Met319 provides a ligand contact to substrate.

This sequence belongs to the alanine racemase family. Pyridoxal 5'-phosphate serves as cofactor.

The enzyme catalyses L-alanine = D-alanine. Its pathway is amino-acid biosynthesis; D-alanine biosynthesis; D-alanine from L-alanine: step 1/1. Functionally, catalyzes the interconversion of L-alanine and D-alanine. May also act on other amino acids. The chain is Alanine racemase (alr) from Actinobacillus pleuropneumoniae serotype 5b (strain L20).